A 256-amino-acid polypeptide reads, in one-letter code: Necrosis-inducing protein NPP1 (256 aa).

Positions 111-121 match the Conserved undecapeptide motif motif; that stretch reads AIMYAWYFPKG. The Conserved heptapeptide motif signature appears at 133–139; the sequence is GHRHEWE.

This sequence belongs to the Necrosis inducing protein (NPP1) family.

Its subcellular location is the secreted. In terms of biological role, secreted effector that acts as a pathogen-associated molecular pattern (PAMP) recognized by the plant immune system. The chain is Necrosis-inducing protein NPP1 from Phytophthora cinnamomi (Cinnamon fungus).